The following is an 80-amino-acid chain: RNA-binding protein Hfq (80 aa).

The Sm domain maps to 10–70 (DIFLNQVRKE…ISTISPMKSV (61 aa)).

This sequence belongs to the Hfq family. Homohexamer.

Its function is as follows. RNA chaperone that binds small regulatory RNA (sRNAs) and mRNAs to facilitate mRNA translational regulation in response to envelope stress, environmental stress and changes in metabolite concentrations. Also binds with high specificity to tRNAs. This chain is RNA-binding protein Hfq, found in Ruminiclostridium cellulolyticum (strain ATCC 35319 / DSM 5812 / JCM 6584 / H10) (Clostridium cellulolyticum).